The sequence spans 258 residues: Histidine/lysine/arginine/ornithine transport ATP-binding protein HisP (258 aa).

One can recognise an ABC transporter domain in the interval 7–253 (LHVIDLHKRY…PQSPRLQQFL (247 aa)). ATP is bound by residues serine 41, glycine 42, glycine 44, lysine 45, serine 46, and threonine 47.

It belongs to the ABC transporter superfamily. As to quaternary structure, the HisPMQJ complex is composed of two ATP-binding proteins (HisP), two transmembrane proteins (HisM and HisQ) and a solute-binding protein (HisJ). The HisPMQ-ArgT complex is composed of two ATP-binding proteins (HisP), two transmembrane proteins (HisM and HisQ) and a solute-binding protein (ArgT).

The protein resides in the cell inner membrane. The enzyme catalyses a polar amino acid(out) + ATP + H2O = a polar amino acid(in) + ADP + phosphate + H(+). The catalysed reaction is L-histidine(out) + ATP + H2O = L-histidine(in) + ADP + phosphate + H(+). It catalyses the reaction L-lysine(out) + ATP + H2O = L-lysine(in) + ADP + phosphate + H(+). It carries out the reaction L-arginine(out) + ATP + H2O = L-arginine(in) + ADP + phosphate + H(+). The enzyme catalyses L-ornithine(out) + ATP + H2O = L-ornithine(in) + ADP + phosphate + H(+). Its activity is regulated as follows. Isolated, soluble HisP has a very low ATPase activity. ATPase activity is slightly increased in the presence of HisM and HisQ, and strongly increased when HisJ is also present. In terms of biological role, part of the ABC transporter complex HisPMQJ involved in histidine transport. Is also part of the ABC transporter complex HisPMQ-ArgT involved in lysine/arginine/ornithine transport. Shows ATPase activity. Responsible for energy coupling to the transport system. This chain is Histidine/lysine/arginine/ornithine transport ATP-binding protein HisP, found in Salmonella typhimurium (strain LT2 / SGSC1412 / ATCC 700720).